Here is a 430-residue protein sequence, read N- to C-terminus: Protein translocase subunit SecY (430 aa).

10 consecutive transmembrane segments (helical) span residues 18-38, 67-87, 118-138, 145-165, 177-197, 213-233, 270-290, 309-329, 369-389, and 390-410; these read VIFTLLMLIVFRIGSFIPVPG, FSIFAMGIMPYITASIVMQLL, IVLGFIQALGMSVGFNNFFPG, VSVYLFIALVLTAGTAFLMWL, GISIIIFAGIAAGIPNGLNLI, IVVILLLALAILAIIVGVIFV, VIPVIFALSLFIFPPTVAGLF, PIGMAVYALLIIGFTYFYTFI, FVGSLFLAVVAILPVFFIKFA, and DLPQAIQIGGTGLLIVVGVAL.

Belongs to the SecY/SEC61-alpha family. Component of the Sec protein translocase complex. Heterotrimer consisting of SecY, SecE and SecG subunits. The heterotrimers can form oligomers, although 1 heterotrimer is thought to be able to translocate proteins. Interacts with the ribosome. Interacts with SecDF, and other proteins may be involved. Interacts with SecA.

The protein resides in the cell membrane. The central subunit of the protein translocation channel SecYEG. Consists of two halves formed by TMs 1-5 and 6-10. These two domains form a lateral gate at the front which open onto the bilayer between TMs 2 and 7, and are clamped together by SecE at the back. The channel is closed by both a pore ring composed of hydrophobic SecY resides and a short helix (helix 2A) on the extracellular side of the membrane which forms a plug. The plug probably moves laterally to allow the channel to open. The ring and the pore may move independently. The sequence is that of Protein translocase subunit SecY from Halalkalibacterium halodurans (strain ATCC BAA-125 / DSM 18197 / FERM 7344 / JCM 9153 / C-125) (Bacillus halodurans).